A 413-amino-acid polypeptide reads, in one-letter code: MKRPNVLNLTCPAIPVVRIGFVGLGNRGILALERYMHLEGIEVKALCDLRKENIERAEHILREFGRPEAENYSEEGMWRKMCECKEIDLIYICTDWLTHTDIAVYALQQGRHVALEVPAAMSVADCWRLVDTAEETRRHCMMLENCCYDAFALTTLNMVQQGVLGEITHAEGAYIHDLRKHYFADEKAGGYHNHWIKLYSQQHTGNPYPTHGLGPVCQWMNIHRGDRMEYLVSMSSRQAGLSAYAGQVFGASSEEAAQSYEMGDVNTTLIHTAKGRTILLQYDVTTPRPYSRHQTVCGTKGFMQKYPVPCLLLDEYGKEPLSGEQFERMMEQYKHPFTAVIGEEARRKNMPNEMNYIMDYRLIHCLRNGLPLDQDVYDAAEWSCITELSERSVRQGSVPVEIPDFTRGNWKER.

NAD(+) contacts are provided by residues 26–27 (NR), Asp48, 96–99 (WLTH), 116–117 (EV), and Asn145. Tyr174 contributes to the substrate binding site. Residues 191–195 (YHNHW) and Tyr208 contribute to the NAD(+) site. Substrate contacts are provided by residues 208–211 (YPTH) and Tyr290.

Belongs to the Gfo/Idh/MocA family. Glycosyl hydrolase 109 subfamily. The cofactor is NAD(+).

Its function is as follows. Glycosidase. This is Glycosyl hydrolase family 109 protein 2 from Phocaeicola vulgatus (strain ATCC 8482 / DSM 1447 / JCM 5826 / CCUG 4940 / NBRC 14291 / NCTC 11154) (Bacteroides vulgatus).